A 352-amino-acid chain; its full sequence is Uroporphyrinogen decarboxylase (352 aa).

Substrate-binding positions include 27–31, Asp-77, Tyr-154, Thr-209, and His-325; that span reads RQAGR.

This sequence belongs to the uroporphyrinogen decarboxylase family. Homodimer.

It is found in the cytoplasm. It catalyses the reaction uroporphyrinogen III + 4 H(+) = coproporphyrinogen III + 4 CO2. Its pathway is porphyrin-containing compound metabolism; protoporphyrin-IX biosynthesis; coproporphyrinogen-III from 5-aminolevulinate: step 4/4. In terms of biological role, catalyzes the decarboxylation of four acetate groups of uroporphyrinogen-III to yield coproporphyrinogen-III. This Legionella pneumophila (strain Paris) protein is Uroporphyrinogen decarboxylase.